The sequence spans 435 residues: NADH-quinone oxidoreductase subunit D (435 aa).

The protein belongs to the complex I 49 kDa subunit family. In terms of assembly, NDH-1 is composed of 14 different subunits. Subunits NuoB, C, D, E, F, and G constitute the peripheral sector of the complex.

Its subcellular location is the cell inner membrane. It catalyses the reaction a quinone + NADH + 5 H(+)(in) = a quinol + NAD(+) + 4 H(+)(out). In terms of biological role, NDH-1 shuttles electrons from NADH, via FMN and iron-sulfur (Fe-S) centers, to quinones in the respiratory chain. The immediate electron acceptor for the enzyme in this species is believed to be ubiquinone. Couples the redox reaction to proton translocation (for every two electrons transferred, four hydrogen ions are translocated across the cytoplasmic membrane), and thus conserves the redox energy in a proton gradient. This is NADH-quinone oxidoreductase subunit D from Xanthomonas oryzae pv. oryzae (strain MAFF 311018).